The following is a 381-amino-acid chain: uncharacterized protein (381 aa).

Disordered stretches follow at residues 1-20 (MPYY…FDPT) and 36-381 (IPPS…EDDE). Residues 9 to 18 (NDVDDFDEFD) show a composition bias toward acidic residues. Composition is skewed to basic and acidic residues over residues 166-175 (TEVEYGRRPE) and 186-237 (SESE…EGYR). A phosphoserine mark is found at S339, S346, and S357. Basic residues predominate over residues 364–374 (KKHRHKHHHQK).

This is an uncharacterized protein from Arabidopsis thaliana (Mouse-ear cress).